We begin with the raw amino-acid sequence, 285 residues long: MKYIGAHVSAAGGLANAPARAAEIGATAFALFTKNQRQWRAAPLTPQVIDDFKIACEKYHFSAAQILPHDSYLINLGHPVSEALEKSRDAFLDEMQRCEQLGLTLLNFHPGSHLMQIAQEDCLARIAESINIALAQTEGVTAVIENTAGQGSNLGFEFEQLAAIIDGVEDKSRVGVCIDTCHAFAAGYDLRTPEACEKTFAEFGKIVGFQYLRGMHLNDAKSAFGSRVDRHHSLGEGNIGHDAFRWIMQDARFDGIPLILETINPDIWAEEIAWLKAQQIAEVMA.

Residues His-69, His-109, Glu-145, Asp-179, His-182, His-216, Asp-229, His-231, and Glu-261 each coordinate Zn(2+).

This sequence belongs to the AP endonuclease 2 family. Zn(2+) is required as a cofactor.

It catalyses the reaction Endonucleolytic cleavage to 5'-phosphooligonucleotide end-products.. In terms of biological role, endonuclease IV plays a role in DNA repair. It cleaves phosphodiester bonds at apurinic or apyrimidinic (AP) sites, generating a 3'-hydroxyl group and a 5'-terminal sugar phosphate. The polypeptide is Probable endonuclease 4 (Salmonella paratyphi A (strain AKU_12601)).